We begin with the raw amino-acid sequence, 325 residues long: Phospho-N-acetylmuramoyl-pentapeptide-transferase (325 aa).

10 helical membrane passes run 3 to 23 (LMIY…PILI), 48 to 68 (GTPT…VFVV), 79 to 99 (AIFA…LKII), 106 to 126 (LKAY…GFYA), 136 to 156 (IIVP…PFII), 174 to 194 (GLAT…SYAT), 199 to 219 (LAVF…YNAY), 223 to 243 (VFMG…VAMM), 246 to 266 (LPLI…SVIL), and 298 to 318 (IVSI…LSLI).

It belongs to the glycosyltransferase 4 family. MraY subfamily. Requires Mg(2+) as cofactor.

It is found in the cell membrane. The enzyme catalyses UDP-N-acetyl-alpha-D-muramoyl-L-alanyl-gamma-D-glutamyl-meso-2,6-diaminopimeloyl-D-alanyl-D-alanine + di-trans,octa-cis-undecaprenyl phosphate = di-trans,octa-cis-undecaprenyl diphospho-N-acetyl-alpha-D-muramoyl-L-alanyl-D-glutamyl-meso-2,6-diaminopimeloyl-D-alanyl-D-alanine + UMP. Its pathway is cell wall biogenesis; peptidoglycan biosynthesis. Its function is as follows. Catalyzes the initial step of the lipid cycle reactions in the biosynthesis of the cell wall peptidoglycan: transfers peptidoglycan precursor phospho-MurNAc-pentapeptide from UDP-MurNAc-pentapeptide onto the lipid carrier undecaprenyl phosphate, yielding undecaprenyl-pyrophosphoryl-MurNAc-pentapeptide, known as lipid I. This Clostridium novyi (strain NT) protein is Phospho-N-acetylmuramoyl-pentapeptide-transferase.